Reading from the N-terminus, the 483-residue chain is FAD-linked oxidoreductase pgmH (483 aa).

One can recognise an FAD-binding PCMH-type domain in the interval 54–215 (SIRLATLVVY…TEFKYRVHKQ (162 aa)).

Belongs to the oxygen-dependent FAD-linked oxidoreductase family. Requires FAD as cofactor.

The protein operates within pigment biosynthesis. It participates in secondary metabolite biosynthesis. FAD-linked oxidoreductase; part of the gene cluster that mediates the biosynthesis of pleosporalin A, ascomycone A, as well as a third cryptic naphthoquinone derived pigment, all responsible for the coloration of conidia. Essential for the production of pleosporalin A, but not the 2 other final products. The pathway begins with the biosynthesis of the cyclized heptaketide 3-acetonyl-1,6,8-trihydroxy-2-naphthaldehyde by the NR-PKS pgmA. The C-6 hydroxyl group is further methylated by the O-methyltransferase pgmB to yield fusarubinaldehyde which is in turn oxidized by the cytochrome P450 monooxygenase pgmC at C-9. The C-1 hydroxyl group is then methylated spontaneously. Although pgmE, pgmD and pgmH are essential for the production of pleosporalin A, it is not the case for the 2 other final products and it remains difficult to assign a specific function to each enzyme. PgmF and pgmG seem not to be involved in pigment biosynthesis although they were regulated by the cluster-specific transcription factor pgmR. In Aspergillus terreus (strain NIH 2624 / FGSC A1156), this protein is FAD-linked oxidoreductase pgmH.